Here is a 1362-residue protein sequence, read N- to C-terminus: Bromodomain-containing protein 4B (1362 aa).

6 disordered regions span residues 22–57 (EGAQMSGQQQPAQPQPQTPMMQTPPPEIARPNQPKR), 200–243 (SLGD…HPPA), 274–367 (LANH…DSKT), 476–639 (DEPE…SYEE), 699–941 (CLRK…TQSP), and 953–1349 (SQAP…MNFQ). Positions 34–49 (QPQPQTPMMQTPPPEI) are enriched in pro residues. The Bromo 1 domain occupies 57–163 (RQTNQLQYLL…KLFLQKISEM (107 aa)). Over residues 219–234 (TPTPPAVIRAPTPPQT) the composition is skewed to pro residues. Residues 326-342 (PRKESGRQIRPIKKTEV) show a composition bias toward basic and acidic residues. Residues 348–358 (PAPPDLHPQPA) show a composition bias toward pro residues. A Bromo 2 domain is found at 365–474 (SKTSEQLRYC…DVFEMRFAKM (110 aa)). The span at 481-503 (APAPVPSPAPGPPAPSIKIPPPT) shows a compositional bias: pro residues. Residues 503 to 521 (TSSDTSSDSSSDSESSSDS) are NPS region. The span at 504–516 (SSDTSSDSSSDSE) shows a compositional bias: low complexity. The interval 542-597 (QLAALSQPQPNKPKKKEREKRKEKHKRKEEVEETRKGRIREPPAKKPKKSVQVSGG) is BID region. Residues 553–568 (KPKKKEREKRKEKHKR) show a composition bias toward basic residues. Over residues 569 to 585 (KEEVEETRKGRIREPPA) the composition is skewed to basic and acidic residues. The span at 606–621 (PPPVTRPARPAPPPAP) shows a compositional bias: pro residues. The NET domain occupies 623–707 (ESSEEDTQRC…SCLRKKRKPQ (85 aa)). A compositionally biased stretch (basic and acidic residues) spans 628–639 (DTQRCRPMSYEE). Positions 722–737 (SYSSSESESSSESSTS) are enriched in low complexity. Over residues 750-766 (QKKKGHSGRESRKHHHP) the composition is skewed to basic residues. 2 stretches are compositionally biased toward pro residues: residues 772–793 (IAPPPVMKPPSPTLAPSYPPPS) and 871–889 (PARPPSASPPLPPPQPHHQ). Basic residues predominate over residues 893–905 (HVHHHHHHHHHAQ). The segment covering 926–941 (YLQQLHKSQQPPTQSP) has biased composition (polar residues). 4 stretches are compositionally biased toward low complexity: residues 953–963 (SQAPMAAPAQS), 977–1006 (SSASPAPSPASSHIHQMQSPPVVPQQQPAG), 1014–1028 (QQQQQQQQQQHPALQ), and 1041–1050 (HQQAKQQQVI). The segment at 1061 to 1361 (RQQKQETYPG…LMEIFEQNLF (301 aa)) is C-terminal (CTD) region. Residues 1086-1099 (QVPPYPGLTHPPSP) are compositionally biased toward pro residues. Residues 1186–1207 (PEKEKQKQEPKTPVAPKKDLKI) show a composition bias toward basic and acidic residues. Over residues 1224-1234 (PTSAGKSTSDS) the composition is skewed to polar residues. Positions 1236–1293 (ELFRRQAREKEERERALKHQAEQAERMRREQERMRTREDDDVQDQTRKAHEEARRRQE) are enriched in basic and acidic residues. Residues 1308-1319 (PAAPSPAQSSQP) are compositionally biased toward low complexity. A compositionally biased stretch (basic and acidic residues) spans 1322-1334 (DQREMARKREQER).

Belongs to the BET family.

The protein resides in the nucleus. The protein localises to the chromosome. Chromatin reader protein that recognizes and binds acetylated histones and plays a key role in transmission of epigenetic memory across cell divisions and transcription regulation. Remains associated with acetylated chromatin throughout the entire cell cycle and provides epigenetic memory for postmitotic G1 gene transcription by preserving acetylated chromatin status and maintaining high-order chromatin structure. During interphase, plays a key role in regulating the transcription of signal-inducible genes by associating with the P-TEFb complex and recruiting it to promoters. This chain is Bromodomain-containing protein 4B (brd4-b), found in Xenopus laevis (African clawed frog).